We begin with the raw amino-acid sequence, 622 residues long: Glutamyl-tRNA(Gln) amidotransferase subunit E (622 aa).

This sequence belongs to the GatB/GatE family. GatE subfamily. As to quaternary structure, heterodimer of GatD and GatE.

It catalyses the reaction L-glutamyl-tRNA(Gln) + L-glutamine + ATP + H2O = L-glutaminyl-tRNA(Gln) + L-glutamate + ADP + phosphate + H(+). Allows the formation of correctly charged Gln-tRNA(Gln) through the transamidation of misacylated Glu-tRNA(Gln) in organisms which lack glutaminyl-tRNA synthetase. The reaction takes place in the presence of glutamine and ATP through an activated gamma-phospho-Glu-tRNA(Gln). The GatDE system is specific for glutamate and does not act on aspartate. In Halobacterium salinarum (strain ATCC 29341 / DSM 671 / R1), this protein is Glutamyl-tRNA(Gln) amidotransferase subunit E.